We begin with the raw amino-acid sequence, 490 residues long: 5'-3' exonuclease PLD3 (490 aa).

Residues 1–38 are Cytoplasmic-facing; that stretch reads MKPKLMYQELKVPAEEPANELPMNEIEAWKAAEKKARW. The helical; Signal-anchor for type II membrane protein transmembrane segment at 39–59 threads the bilayer; sequence VLLVLILAVVGFGALMTQLFL. The Lumenal segment spans residues 60–490; sequence WEYGDLHLFG…DSVGNACRLL (431 aa). 2 disulfide bridges follow: cysteine 77–cysteine 239 and cysteine 81–cysteine 237. N-linked (GlcNAc...) asparagine glycans are attached at residues asparagine 97 and asparagine 132. One can recognise a PLD phosphodiesterase 1 domain in the interval 196 to 223; it reads THGVLHTKFWVVDQTHFYLGSANMDWRS. Residues histidine 201, lysine 203, and aspartate 208 contribute to the active site. The active-site Proton donor is the histidine 201. Phosphate-binding residues include histidine 201 and lysine 203. Residue asparagine 218 participates in phosphate binding. N-linked (GlcNAc...) asparagine glycans are attached at residues asparagine 236, asparagine 284, and asparagine 387. The cysteines at positions 366 and 487 are disulfide-linked. Residues 411-437 form the PLD phosphodiesterase 2 domain; it reads YARVNHNKYMVTERATYIGTSNWSGNY. Histidine 416 provides a ligand contact to phosphate. The active-site Nucleophile is histidine 416. Residue phenylalanine 438 participates in Mg(2+) binding.

Belongs to the phospholipase D family. In terms of assembly, homodimer. Interacts with APP. Post-translationally, N-glycosylated. Proteolytically processed to a soluble form that is stable within endosomes and lysosomes. During transport through the secretory pathway becomes proteolysed by cysteine proteases, thereby releasing a stable soluble lysosomal lumenal polypeptide, whereas the transmembrane-bound fragment is rapidly degraded. Its transport route to lysosomes involves ubiquitination and the ESCRT complex. In terms of processing, ubiquitinated. Ubiquitination mediates sorting into lysosomes.

It is found in the endoplasmic reticulum membrane. Its subcellular location is the lysosome lumen. It localises to the early endosome membrane. The protein localises to the late endosome membrane. The protein resides in the golgi apparatus membrane. It is found in the endosome membrane. It carries out the reaction Exonucleolytic cleavage in the 5'- to 3'-direction to yield nucleoside 3'-phosphates.. It catalyses the reaction a 5'-end 5'-dephospho-ribonucleotidyl-ribonucleotide-RNA + H2O = a ribonucleoside 3'-phosphate + a 5'-end dephospho-ribonucleoside-RNA + H(+). The catalysed reaction is a ribonucleoside 3'-phosphate-2'-3'-cyclophospho-GMP + H2O = a ribonucleoside 3'-phosphate + 2',3'-cyclophospho-GMP + H(+). The enzyme catalyses a 5'-end 5'-dephospho-2'-deoxyribonucleotidyl-2'-deoxyribonucleotide in single-stranded DNA + H2O = a 5'-end dephospho-2'-deoxyribonucleoside in single-stranded DNA + a 2'-deoxyribonucleoside 3'-phosphate + H(+). It carries out the reaction a 5'-end 5'-phospho-2'-deoxyribonucleotide in single-stranded DNA + H2O = a 5'-end 5'-dephospho-2'-deoxyribonucleotide in single-stranded DNA + phosphate. It catalyses the reaction a 3-lyso-sn-glycero-1-phospho-(3'-acyl-1'-sn-glycerol) + a 1-acyl-sn-glycerol = a 3-acyl-sn-glycero-1-phospho-(3'-acyl-1'-sn-glycerol) + glycerol. The catalysed reaction is 3-lyso-sn-glycero-1-phospho-(3'-(9Z-octadecenoyl)-1'-sn-glycerol) + 1-(9Z-octadecenoyl)-sn-glycerol = 3-(9Z-octadecenoyl)-sn-glycero-1-phospho-(3'-(9Z-octadecenoyl)-1'-sn-glycerol) + glycerol. In terms of biological role, 5'-&gt;3' exonuclease that hydrolyzes the phosphodiester bond of single-stranded DNA (ssDNA) and RNA molecules to form nucleoside 3'-monophosphates and 5'-end 5'-hydroxy deoxyribonucleotide/ribonucleotide fragments. Partially redundant with PLD4, can cleave all four nucleotides displaying higher efficiency for ssDNA and RNA fragments initiated with uridine and guanosine residues and lower efficiency for cytidine-initiated substrates. As a result, it does not always degrade polynucleotides to the single nucleotide level, it can stall at specific sites sparing certain fragments from exonucleolytic degradation. Processes self and pathogenic ssDNA and RNA molecules that reach the endolysosomal compartment via phagocytosis or autophagy and may serve as 'danger' signals for recognition by innate immune receptors such as toll-like receptors (TLRs). Degrades mitochondrial CpG-rich ssDNA fragments to prevent TLR9 activation and autoinflammatory response, but it can cleave viral RNA to generate ligands for TLR7 activation and initiate antiviral immune responses. In plasmacytoid dendritic cells, it cooperates with endonuclease RNASET2 to release 2',3'-cyclic guanosine monophosphate (2',3'-cGMP), a potent stimulatory ligand for TLR7. Produces 2',3'-cGMPs and cytidine-rich RNA fragments that occupy TLR7 ligand-binding pockets and trigger a signaling-competent state. Can exert polynucleotide phosphatase activity toward 5'-phosphorylated ssDNA substrates although at a slow rate. Transphosphatidylase that catalyzes the exchange with R to S stereo-inversion of the glycerol moiety between (S,R)-lysophosphatidylglycerol (LPG) and monoacylglycerol (MAG) substrates to yield (S,S)-bis(monoacylglycero)phosphate (BMP). Can synthesize a variety of (S,S)-BMPs representing the main phospholipid constituent of lysosomal intralumenal vesicle (ILV) membranes that bind acid hydrolases for lipid degradation. Regulates the homeostasis and interorganellar communication of the endolysosomal system with an overall impact on cellular removal of dysfunctional organelles via autophagy as well as proper protein and lipid turnover. May play a role in myotube formation in response to ER stress. The chain is 5'-3' exonuclease PLD3 (PLD3) from Pongo abelii (Sumatran orangutan).